Reading from the N-terminus, the 1213-residue chain is Chitin synthase 3 (1213 aa).

Residues 1–97 are disordered; the sequence is MSNFRDSSSP…TPPHQEEEED (97 aa). At 1 to 168 the chain is on the cytoplasmic side; the sequence is MSNFRDSSSP…KPKHDIYFWK (168 aa). Positions 32 to 44 are enriched in basic and acidic residues; the sequence is IRPERSRMDESHP. The segment covering 75 to 87 has biased composition (polar residues); that stretch reads ELSTSRSHLSNYA. Residues 169–189 traverse the membrane as a helical segment; sequence VYCYAITFWAPAPLLKLFGLP. Residues 190–200 lie on the Extracellular side of the membrane; sequence TKDRQFAWREK. The chain crosses the membrane as a helical span at residues 201–221; the sequence is IGLISCILYVGAFVAYLTFGF. Residues 222 to 450 lie on the Cytoplasmic side of the membrane; that stretch reads TKTVCSSQVV…TDTIGCIASK (229 aa). A helical transmembrane segment spans residues 451 to 471; that stretch reads VVLYMSLVFILSVVVVKFIMA. Over 472-1016 the chain is Extracellular; it reads CWFKWVTSRK…INSTVHNLFE (545 aa). N588 and N1008 each carry an N-linked (GlcNAc...) asparagine glycan. A helical membrane pass occupies residues 1017–1037; it reads LVLVKDLCGTFCFSMQFVIFI. Topologically, residues 1038–1039 are cytoplasmic; sequence EL. A helical membrane pass occupies residues 1040–1060; that stretch reads IGTLVLPAAITFTIYVIIVAI. Residues 1061–1065 lie on the Extracellular side of the membrane; sequence VSKPT. Residues 1066–1086 form a helical membrane-spanning segment; it reads PVMSLVLLAVIFGLPGCLIVI. Residues 1087–1213 are Cytoplasmic-facing; sequence TVSSLSYLVY…LSQGSSSGSS (127 aa). The tract at residues 1161-1213 is disordered; sequence ERRSTENRKQQQQQQLTNNSSNNLAVPGAAWDPSNTGGNLIDDLSQGSSSGSS.

This sequence belongs to the chitin synthase family. Class IV subfamily.

The protein resides in the cell membrane. It carries out the reaction [(1-&gt;4)-N-acetyl-beta-D-glucosaminyl](n) + UDP-N-acetyl-alpha-D-glucosamine = [(1-&gt;4)-N-acetyl-beta-D-glucosaminyl](n+1) + UDP + H(+). Polymerizes chitin, a structural polymer of the cell wall and septum, by transferring the sugar moiety of UDP-GlcNAc to the non-reducing end of the growing chitin polymer. The sequence is that of Chitin synthase 3 (CHS3) from Candida albicans (Yeast).